The chain runs to 185 residues: Alkyl hydroperoxide reductase AhpD (185 aa).

Cys131 functions as the Proton donor in the catalytic mechanism. Cysteines 131 and 134 form a disulfide. Cys134 (cysteine sulfenic acid (-SOH) intermediate) is an active-site residue.

The protein belongs to the AhpD family. As to quaternary structure, homotrimer.

The enzyme catalyses N(6)-[(R)-dihydrolipoyl]-L-lysyl-[lipoyl-carrier protein] + a hydroperoxide = N(6)-[(R)-lipoyl]-L-lysyl-[lipoyl-carrier protein] + an alcohol + H2O. Its function is as follows. Antioxidant protein with alkyl hydroperoxidase activity. Required for the reduction of the AhpC active site cysteine residues and for the regeneration of the AhpC enzyme activity. The sequence is that of Alkyl hydroperoxide reductase AhpD from Frankia alni (strain DSM 45986 / CECT 9034 / ACN14a).